The following is a 509-amino-acid chain: MKKTIYITTPIYYPSGDLHLGHIYSTNIAWVLRNYKKIQGYETFFSTGSDEHGQKIFNKAQELKLETQDYVDRQANKFIDFWKKANIDYDFFARTTNKEHKEVVREIFHKLKEKNIIYLDKYVGLYSVSDEEFLTETQALKKDNKFFHPVSNHELIKIEEESYFFNLNLFIDWIKEFLDQDIISSKAIVNELKSNFINKGLENLSVTRIKLDWGIKIDQSSKHVIYVWLDALFQYLTNLGYGSKNQSLYEKFWKNGDERVHVVGKEITRFHCIYWPIFLKSLNVKMPTKIISHGWIVTPEGKMSKSKGNVVDPVVLIEKYGSEVLKYFLIAKLSIKKDGVFSEELLVSAYNNDLVNTFSNLISRTVKMILNNYDRPLSFILSKDQEDLEIEKDIKNSFETFCSFAEEYEFDKAFESTINLGKKLNLYIDKTRPWLLTKEDQKLEIVLNRLLNGIYAMAFELSIVMPQTSQKLAKALGFESFEKSKLEDFKKFDNIKIEKIENLFNRIKL.

A 'HIGH' region motif is present at residues 12-22 (YYPSGDLHLGH). The short motif at 302–306 (KMSKS) is the 'KMSKS' region element. Residue Lys-305 coordinates ATP.

Belongs to the class-I aminoacyl-tRNA synthetase family. MetG type 2B subfamily. As to quaternary structure, monomer.

The protein localises to the cytoplasm. The enzyme catalyses tRNA(Met) + L-methionine + ATP = L-methionyl-tRNA(Met) + AMP + diphosphate. Is required not only for elongation of protein synthesis but also for the initiation of all mRNA translation through initiator tRNA(fMet) aminoacylation. The polypeptide is Methionine--tRNA ligase (metG) (Mycoplasmopsis pulmonis (strain UAB CTIP) (Mycoplasma pulmonis)).